The primary structure comprises 688 residues: Glycine--tRNA ligase beta subunit (688 aa).

The protein belongs to the class-II aminoacyl-tRNA synthetase family. Tetramer of two alpha and two beta subunits.

It localises to the cytoplasm. The catalysed reaction is tRNA(Gly) + glycine + ATP = glycyl-tRNA(Gly) + AMP + diphosphate. In Shewanella sp. (strain MR-7), this protein is Glycine--tRNA ligase beta subunit.